Reading from the N-terminus, the 294-residue chain is 4-diphosphocytidyl-2-C-methyl-D-erythritol kinase (294 aa).

The active site involves Lys-11. Residue 96 to 106 participates in ATP binding; sequence PVAAGIGGGSA. Asp-138 is an active-site residue.

It belongs to the GHMP kinase family. IspE subfamily.

It carries out the reaction 4-CDP-2-C-methyl-D-erythritol + ATP = 4-CDP-2-C-methyl-D-erythritol 2-phosphate + ADP + H(+). The protein operates within isoprenoid biosynthesis; isopentenyl diphosphate biosynthesis via DXP pathway; isopentenyl diphosphate from 1-deoxy-D-xylulose 5-phosphate: step 3/6. Functionally, catalyzes the phosphorylation of the position 2 hydroxy group of 4-diphosphocytidyl-2C-methyl-D-erythritol. In Rhodopseudomonas palustris (strain BisB5), this protein is 4-diphosphocytidyl-2-C-methyl-D-erythritol kinase.